The primary structure comprises 328 residues: Dolichyl-diphosphooligosaccharide--protein glycosyltransferase subunit MAGT1 (328 aa).

A signal peptide spans 1 to 22 (MAALPVLVLVLLLACGGPRAAG). Residues 23–177 (QKRKEMVLSE…DVNIRVIRPP (155 aa)) are Extracellular-facing. In terms of domain architecture, Thioredoxin spans 40–168 (WTSKRSVIRM…LARWVADRTD (129 aa)). The N-linked (GlcNAc...) asparagine glycan is linked to N64. Cysteines 80 and 83 form a disulfide. A helical transmembrane segment spans residues 178–198 (NYAGPLMLGLLLAVIGGLVYL). Residues 199-211 (RGSNLDFLYNKTG) lie on the Cytoplasmic side of the membrane. The chain crosses the membrane as a helical span at residues 212–232 (WAFAALCFVLAMTSGQMWNHI). Topologically, residues 233 to 257 (RGPPYAHKNPHTGQVNYIHGSSQAQ) are extracellular. The chain crosses the membrane as a helical span at residues 258–278 (FVAETHIVLLFNGGVTLGMVL). Residues 279–293 (LHEAATSDMDVGKRK) lie on the Cytoplasmic side of the membrane. The helical transmembrane segment at 294–314 (IMCIAGIGLVVFFFSWLLSVF) threads the bilayer. The Extracellular segment spans residues 315–328 (RSKYHGYPYSFLMS).

This sequence belongs to the OST3/OST6 family. Accessory component of the STT3B-containing form of the oligosaccharyltransferase (OST) complex. OST exists in two different complex forms which contain common core subunits RPN1, RPN2, OST48, OST4, DAD1 and TMEM258, either STT3A or STT3B as catalytic subunits, and form-specific accessory subunits. OST can form stable complexes with the Sec61 complex or with both the Sec61 and TRAP complexes.

Its subcellular location is the cell membrane. It localises to the endoplasmic reticulum. It is found in the endoplasmic reticulum membrane. It functions in the pathway protein modification; protein glycosylation. Its function is as follows. Accessory component of the STT3B-containing form of the N-oligosaccharyl transferase (OST) complex which catalyzes the transfer of a high mannose oligosaccharide from a lipid-linked oligosaccharide donor to an asparagine residue within an Asn-X-Ser/Thr consensus motif in nascent polypeptide chains. Involved in N-glycosylation of STT3B-dependent substrates. Specifically required for the glycosylation of a subset of acceptor sites that are near cysteine residues; in this function seems to act redundantly with TUSC3. In its oxidized form proposed to form transient mixed disulfides with a glycoprotein substrate to facilitate access of STT3B to the unmodified acceptor site. Also has oxidoreductase-independent functions in the STT3B-containing OST complex possibly involving substrate recognition. Could indirectly play a role in Mg(2+) transport in epithelial cells. The sequence is that of Dolichyl-diphosphooligosaccharide--protein glycosyltransferase subunit MAGT1 from Gallus gallus (Chicken).